A 158-amino-acid polypeptide reads, in one-letter code: Small ribosomal subunit protein uS7 (158 aa).

It belongs to the universal ribosomal protein uS7 family. Part of the 30S ribosomal subunit. Contacts proteins S9 and S11.

Its function is as follows. One of the primary rRNA binding proteins, it binds directly to 16S rRNA where it nucleates assembly of the head domain of the 30S subunit. Is located at the subunit interface close to the decoding center, probably blocks exit of the E-site tRNA. The sequence is that of Small ribosomal subunit protein uS7 from Leptospira biflexa.